We begin with the raw amino-acid sequence, 256 residues long: H-2 class II histocompatibility antigen, A-D alpha chain (256 aa).

Positions 1 to 23 (MPCSRALILGVLALNTMLSLCGG) are cleaved as a signal peptide. The segment at 24 to 111 (EDDIEADHVG…KRSNFTPATN (88 aa)) is alpha-1. The Extracellular portion of the chain corresponds to 24-218 (EDDIEADHVG…IPAPMSELTE (195 aa)). The alpha-2 stretch occupies residues 112-205 (EAPQATVFPK…GLEEPVLKHW (94 aa)). The Ig-like C1-type domain maps to 114 to 206 (PQATVFPKSP…LEEPVLKHWE (93 aa)). The cysteines at positions 134 and 190 are disulfide-linked. The N-linked (GlcNAc...) asparagine glycan is linked to Asn145. The interval 206–218 (EPEIPAPMSELTE) is connecting peptide. The chain crosses the membrane as a helical span at residues 219–244 (TVVCALGLSVGLVGIVVGTIFIIQGL). The Cytoplasmic segment spans residues 245 to 256 (RSGGTSRHPGPL).

Belongs to the MHC class II family.

It localises to the membrane. In Mus musculus (Mouse), this protein is H-2 class II histocompatibility antigen, A-D alpha chain (H2-Aa).